The chain runs to 63 residues: Small ribosomal subunit protein bS21 (63 aa).

It belongs to the bacterial ribosomal protein bS21 family.

In Azobacteroides pseudotrichonymphae genomovar. CFP2, this protein is Small ribosomal subunit protein bS21.